Here is a 398-residue protein sequence, read N- to C-terminus: Inner membrane protein YjgN (398 aa).

The Cytoplasmic portion of the chain corresponds to Met-1–Tyr-24. The helical transmembrane segment at Phe-25–Trp-45 threads the bilayer. Residues Ala-46 to Asn-73 lie on the Periplasmic side of the membrane. Residues Val-74–Ala-94 traverse the membrane as a helical segment. A topological domain (cytoplasmic) is located at residue Asp-95. A helical membrane pass occupies residues Met-96–Ala-116. The Periplasmic segment spans residues Lys-117–Val-142. The chain crosses the membrane as a helical span at residues Trp-143 to Ile-163. Over Ser-164–Ser-175 the chain is Cytoplasmic. The helical transmembrane segment at Val-176 to Gly-196 threads the bilayer. The Periplasmic portion of the chain corresponds to Thr-197–Lys-228. Residues Tyr-229–Phe-249 traverse the membrane as a helical segment. The Cytoplasmic portion of the chain corresponds to Asp-250–Lys-278. The chain crosses the membrane as a helical span at residues Met-279 to Val-299. Residues Ser-300–Ala-333 are Periplasmic-facing. The helical transmembrane segment at Leu-334–Ile-354 threads the bilayer. At Asp-355–Leu-398 the chain is on the cytoplasmic side.

The protein localises to the cell inner membrane. The chain is Inner membrane protein YjgN (yjgN) from Escherichia coli O157:H7.